We begin with the raw amino-acid sequence, 344 residues long: Dihydroorotase (344 aa).

2 residues coordinate Zn(2+): H13 and H15. Substrate is bound by residues 15–17 (HLR) and N41. Zn(2+)-binding residues include K99, H136, and H174. K99 is subject to N6-carboxylysine. Position 136 (H136) interacts with substrate. L219 serves as a coordination point for substrate. Residue D247 coordinates Zn(2+). D247 is an active-site residue. Residues H251 and A263 each coordinate substrate.

Belongs to the metallo-dependent hydrolases superfamily. DHOase family. Class II DHOase subfamily. As to quaternary structure, homodimer. Requires Zn(2+) as cofactor.

The enzyme catalyses (S)-dihydroorotate + H2O = N-carbamoyl-L-aspartate + H(+). Its pathway is pyrimidine metabolism; UMP biosynthesis via de novo pathway; (S)-dihydroorotate from bicarbonate: step 3/3. Its function is as follows. Catalyzes the reversible cyclization of carbamoyl aspartate to dihydroorotate. This chain is Dihydroorotase, found in Acinetobacter baylyi (strain ATCC 33305 / BD413 / ADP1).